A 125-amino-acid polypeptide reads, in one-letter code: Protein Bouncer (125 aa).

The N-terminal stretch at 1–18 is a signal peptide; the sequence is MGCVLLFLLLVCVPVVLP. 5 disulfides stabilise this stretch: Cys23/Cys48, Cys26/Cys35, Cys42/Cys66, Cys72/Cys91, and Cys92/Cys97. The UPAR/Ly6 domain occupies 23–98; the sequence is CLFCPVTSLN…FSCCGGHYCN (76 aa). A glycan (N-linked (GlcNAc...) asparagine) is linked at Asn32. The N-linked (GlcNAc...) asparagine glycan is linked to Asn84. Asn98 carries GPI-anchor amidated asparagine lipidation. Positions 99 to 125 are cleaved as a propeptide — removed in mature form; the sequence is SQPRAEPGGRLLLLLLPAAALTAAGAL.

It belongs to the SPACA4/bouncer family. As to quaternary structure, interacts with spermatocyte complex composed of izumo1, spaca6 and tmem81. Post-translationally, N-glycosylated. In terms of tissue distribution, highly expressed in oocytes. Not expressed in testis.

The protein localises to the cell membrane. Functionally, oocyte-expressed fertilization factor that mediates sperm-egg binding and is essential for sperm entry into the egg. Necessary and sufficient to mediate species-specific gamete recognition and fertilization, which is essential for vertebrate species performing external fertilization. External fertilization cannot guarantee that only conspecific sperm reaches the egg by precopulatory mate choice: proteins such as Bouncer can therefore support the selection of conspecific sperm. The sequence is that of Protein Bouncer from Danio rerio (Zebrafish).